The sequence spans 195 residues: Endoribonuclease YbeY (195 aa).

H153, H157, and H163 together coordinate Zn(2+).

Belongs to the endoribonuclease YbeY family. The cofactor is Zn(2+).

Its subcellular location is the cytoplasm. In terms of biological role, single strand-specific metallo-endoribonuclease involved in late-stage 70S ribosome quality control and in maturation of the 3' terminus of the 16S rRNA. This is Endoribonuclease YbeY from Prochlorococcus marinus (strain SARG / CCMP1375 / SS120).